The chain runs to 194 residues: uncharacterized protein (194 aa).

This is an uncharacterized protein from Rickettsia prowazekii (strain Madrid E).